Consider the following 100-residue polypeptide: Urease subunit gamma (100 aa).

Belongs to the urease gamma subunit family. Heterotrimer of UreA (gamma), UreB (beta) and UreC (alpha) subunits. Three heterotrimers associate to form the active enzyme.

The protein localises to the cytoplasm. The enzyme catalyses urea + 2 H2O + H(+) = hydrogencarbonate + 2 NH4(+). It functions in the pathway nitrogen metabolism; urea degradation; CO(2) and NH(3) from urea (urease route): step 1/1. The chain is Urease subunit gamma from Limosilactobacillus fermentum (Lactobacillus fermentum).